The sequence spans 513 residues: MTTTPKPLVLMILDGFGHSESHESNAVYAAKKPVLDRLCASMPNGLISGSGMDVGLPDGQMGNSEVGHMNLGAGRVVYQDFTRVTKAIRDGEFFENPTICAAVDKAVDAGKAVHILGLLSDGGVHSHQDHLIAMAELAFKRGAEKIYLHAFLDGRDTPPKSAQSSIELLDETFKTLGKGRIASLIGRYFAMDRDNRWDRVAQAYNLIVDGQGQFNAATAQEGLQAAYAREESDEFVKATTIGEPVKVEDGDAVVFMNFRADRARELTRVFVEDDFKDFERPRQPKLAGFVMLTQYAASIPAPSAFAPGSLENVLGDYLAKNGKTQLRIAETEKYAHVTFFFSGGREEPFPGEERILIPSPKVATYDLQPEMSAPEVTDKIVDAIEHQRYDVIIVNYANGDMVGHSGVFEAAVKAVECLDLCVGRIVDALEKVGGEALITADHGNVEQMSDESTGQAHTAHTTEPVPFIYVGKRALKVREGGVLADVAPTMLKLLGLPKPAEMTGTSILVDPAH.

Mn(2+) contacts are provided by D14 and S64. S64 functions as the Phosphoserine intermediate in the catalytic mechanism. Substrate-binding positions include H125, 155-156 (RD), R187, R193, 259-262 (RADR), and K333. Mn(2+) is bound by residues D400, H404, D441, H442, and H460.

Belongs to the BPG-independent phosphoglycerate mutase family. As to quaternary structure, monomer. Requires Mn(2+) as cofactor.

It catalyses the reaction (2R)-2-phosphoglycerate = (2R)-3-phosphoglycerate. Its pathway is carbohydrate degradation; glycolysis; pyruvate from D-glyceraldehyde 3-phosphate: step 3/5. In terms of biological role, catalyzes the interconversion of 2-phosphoglycerate and 3-phosphoglycerate. The polypeptide is 2,3-bisphosphoglycerate-independent phosphoglycerate mutase (Pseudomonas fluorescens (strain ATCC BAA-477 / NRRL B-23932 / Pf-5)).